Consider the following 911-residue polypeptide: DNA ligase 4 (911 aa).

ATP is bound by residues E271, T272, K273, L274, R278, E331, K345, F367, E427, K432, K449, and K451. The active-site N6-AMP-lysine intermediate is the K273. A Mg(2+)-binding site is contributed by E331. E427 serves as a coordination point for Mg(2+). The segment at L610–D620 is required for catalytic activity. BRCT domains are found at residues K654 to M743 and S808 to L911.

Belongs to the ATP-dependent DNA ligase family. Interacts with XRCC4; the LIG4-XRCC4 subcomplex has a 1:2 stoichiometry and XRCC4 is required for LIG4 stability. Component of the core long-range non-homologous end joining (NHEJ) complex (also named DNA-PK complex) composed of PRKDC, LIG4, XRCC4, XRCC6/Ku70, XRCC5/Ku86 and NHEJ1/XLF. Additional component of the NHEJ complex includes PAXX. Following autophosphorylation, PRKDC dissociates from DNA, leading to formation of the short-range NHEJ complex, composed of LIG4, XRCC4, XRCC6/Ku70, XRCC5/Ku86 and NHEJ1/XLF. Interacts with DCLRE1C; the interaction is direct. Interacts with APLF. Requires Mg(2+) as cofactor.

It is found in the nucleus. The enzyme catalyses ATP + (deoxyribonucleotide)n-3'-hydroxyl + 5'-phospho-(deoxyribonucleotide)m = (deoxyribonucleotide)n+m + AMP + diphosphate.. DNA ligase involved in DNA non-homologous end joining (NHEJ); required for double-strand break (DSB) repair and V(D)J recombination. Catalyzes the NHEJ ligation step of the broken DNA during DSB repair by resealing the DNA breaks after the gap filling is completed. Joins single-strand breaks in a double-stranded polydeoxynucleotide in an ATP-dependent reaction. LIG4 is mechanistically flexible: it can ligate nicks as well as compatible DNA overhangs alone, while in the presence of XRCC4, it can ligate ends with 2-nucleotides (nt) microhomology and 1-nt gaps. Forms a subcomplex with XRCC4; the LIG4-XRCC4 subcomplex is responsible for the NHEJ ligation step and XRCC4 enhances the joining activity of LIG4. Binding of the LIG4-XRCC4 complex to DNA ends is dependent on the assembly of the DNA-dependent protein kinase complex DNA-PK to these DNA ends. LIG4 regulates nuclear localization of XRCC4. The polypeptide is DNA ligase 4 (Mus musculus (Mouse)).